A 228-amino-acid chain; its full sequence is Cytochrome b5 domain-containing protein 1 (228 aa).

The Cytochrome b5 heme-binding domain maps to 17-83; sequence RRYFTPAEVA…DPKTRDIRKH (67 aa). Heme contacts are provided by Tyr-52 and His-83.

Belongs to the cytochrome b5 family.

Its subcellular location is the cytoplasm. The protein localises to the cytoskeleton. The protein resides in the cilium axoneme. Functionally, radial spoke stalk protein that binds heme under oxidizing conditions. Required for the coordinated beating of multiple cilia maybe by functioning in a redox signaling pathway. The protein is Cytochrome b5 domain-containing protein 1 of Homo sapiens (Human).